The following is a 417-amino-acid chain: Interferon-gamma-inducible GTPase 10 (417 aa).

G2 carries N-myristoyl glycine lipidation. Positions A67–E249 constitute an IRG-type G domain. GDP contacts are provided by G78, A79, S82, T83, S101, K183, D185, and S231. 2 helical membrane passes run E284 to D302 and A370 to Y387.

Belongs to the TRAFAC class dynamin-like GTPase superfamily. GB1/RHD3 GTPase family. GB1 subfamily. Homooligomer; homooligomerization occurs upon GTP-binding and is required for the association with membranous structures. Homodimer; GDP-binding induces formation of an inactive head-to-head homodimer. Myristoylation is required for localization to pathogen-containing vacuoles. Post-translationally, (Microbial infection) Phosphorylated by Toxoplasma gondii ROP18.

The protein localises to the membrane. It is found in the cytoplasmic vesicle membrane. The enzyme catalyses GTP + H2O = GDP + phosphate + H(+). Its function is as follows. Interferon (IFN)-inducible GTPase that plays important roles in innate immunity against a diverse range of bacterial, viral and protozoan pathogens by mediating cytosolic release of pathogenic ligands that activate the inflammasomes. Following infection, recruited to the membrane of pathogens in a GBP-dependent manner and mediates disruption of the pathogen membrane, liberating ligands that are detected by inflammasomes, such as lipopolysaccharide (LPS) that activates the non-canonical CASP4/CASP11 inflammasome or double-stranded DNA (dsDNA) that activates the AIM2 inflammasome. Promotes AIM2 and NLRP3 inflammasome activation following A.fumigatus infection by liberating beta-glucan, which directly triggers inflammasome assembly. Promotes NLRP3 inflammasome activation following influenza A virus infection. The sequence is that of Interferon-gamma-inducible GTPase 10 from Mus musculus (Mouse).